A 341-amino-acid chain; its full sequence is Biotin synthase (341 aa).

A Radical SAM core domain is found at 40–267 (AEIQVSTLLS…RSMVRLSAGR (228 aa)). [4Fe-4S] cluster-binding residues include Cys-55, Cys-59, and Cys-62. [2Fe-2S] cluster-binding residues include Cys-99, Cys-130, Cys-190, and Arg-262.

It belongs to the radical SAM superfamily. Biotin synthase family. Homodimer. [4Fe-4S] cluster is required as a cofactor. Requires [2Fe-2S] cluster as cofactor.

It carries out the reaction (4R,5S)-dethiobiotin + (sulfur carrier)-SH + 2 reduced [2Fe-2S]-[ferredoxin] + 2 S-adenosyl-L-methionine = (sulfur carrier)-H + biotin + 2 5'-deoxyadenosine + 2 L-methionine + 2 oxidized [2Fe-2S]-[ferredoxin]. It functions in the pathway cofactor biosynthesis; biotin biosynthesis; biotin from 7,8-diaminononanoate: step 2/2. Its function is as follows. Catalyzes the conversion of dethiobiotin (DTB) to biotin by the insertion of a sulfur atom into dethiobiotin via a radical-based mechanism. The polypeptide is Biotin synthase (Xylella fastidiosa (strain 9a5c)).